A 304-amino-acid polypeptide reads, in one-letter code: Acetyl-coenzyme A carboxylase carboxyl transferase subunit beta (304 aa).

The region spanning 52–304 (EVTKCPSCGV…TIFKVLNDII (253 aa)) is the CoA carboxyltransferase N-terminal domain. Zn(2+)-binding residues include Cys56, Cys59, Cys75, and Cys78. The C4-type zinc finger occupies 56 to 78 (CPSCGVLSHKSEIRANMKMCSNC).

It belongs to the AccD/PCCB family. Acetyl-CoA carboxylase is a heterohexamer composed of biotin carboxyl carrier protein (AccB), biotin carboxylase (AccC) and two subunits each of ACCase subunit alpha (AccA) and ACCase subunit beta (AccD). Zn(2+) is required as a cofactor.

It is found in the cytoplasm. It carries out the reaction N(6)-carboxybiotinyl-L-lysyl-[protein] + acetyl-CoA = N(6)-biotinyl-L-lysyl-[protein] + malonyl-CoA. It participates in lipid metabolism; malonyl-CoA biosynthesis; malonyl-CoA from acetyl-CoA: step 1/1. Its function is as follows. Component of the acetyl coenzyme A carboxylase (ACC) complex. Biotin carboxylase (BC) catalyzes the carboxylation of biotin on its carrier protein (BCCP) and then the CO(2) group is transferred by the transcarboxylase to acetyl-CoA to form malonyl-CoA. In Fusobacterium nucleatum subsp. nucleatum (strain ATCC 25586 / DSM 15643 / BCRC 10681 / CIP 101130 / JCM 8532 / KCTC 2640 / LMG 13131 / VPI 4355), this protein is Acetyl-coenzyme A carboxylase carboxyl transferase subunit beta.